The sequence spans 156 residues: Large ribosomal subunit protein uL15 (156 aa).

A disordered region spans residues 25–48; sequence RGIGCGKGKTSGRGHKGQKARSGV. A compositionally biased stretch (basic residues) spans 34 to 43; that stretch reads TSGRGHKGQK.

This sequence belongs to the universal ribosomal protein uL15 family. Part of the 50S ribosomal subunit.

In terms of biological role, binds to the 23S rRNA. This Wolbachia pipientis wMel protein is Large ribosomal subunit protein uL15.